A 250-amino-acid chain; its full sequence is tRNA (guanine-N(1)-)-methyltransferase (250 aa).

Residues Gly-116 and 136–141 contribute to the S-adenosyl-L-methionine site; that span reads IGDYVL.

Belongs to the RNA methyltransferase TrmD family. In terms of assembly, homodimer.

The protein localises to the cytoplasm. It catalyses the reaction guanosine(37) in tRNA + S-adenosyl-L-methionine = N(1)-methylguanosine(37) in tRNA + S-adenosyl-L-homocysteine + H(+). Functionally, specifically methylates guanosine-37 in various tRNAs. This chain is tRNA (guanine-N(1)-)-methyltransferase, found in Pseudomonas syringae pv. tomato (strain ATCC BAA-871 / DC3000).